Reading from the N-terminus, the 68-residue chain is 1-carboxybiuret hydrolase subunit AtzG (68 aa).

Heterotetramer consisting of 2 AtzE and 2 AtzG subunits.

Its pathway is xenobiotic degradation; atrazine degradation. Its function is as follows. Important for the activity of the AtzE subunit of 1-carboxybiuret hydrolase. The sequence is that of 1-carboxybiuret hydrolase subunit AtzG from Pseudomonas sp. (strain ADP).